The following is a 428-amino-acid chain: D-serine dehydratase (428 aa).

Lys57 is subject to N6-(pyridoxal phosphate)lysine. Residues Tyr203, Tyr210, Thr255, Gly286, and Asn287 each contribute to the pyridoxal 5'-phosphate site. His398 and Cys400 together coordinate Zn(2+).

This sequence belongs to the DSD1 family. Homodimer. It depends on pyridoxal 5'-phosphate as a cofactor. The cofactor is Zn(2+).

The enzyme catalyses D-serine = pyruvate + NH4(+). With respect to regulation, sodium cyanoborohydride, N-ethylmaleimide, hydroxylamine, phenyhydrazin and EDTA are inhibitors of the catalytic activity. Catalyzes the conversion of D-serine to pyruvate and ammonia. May play a role in D-serine detoxification. The protein is D-serine dehydratase of Saccharomyces cerevisiae (strain ATCC 204508 / S288c) (Baker's yeast).